A 123-amino-acid chain; its full sequence is MSRLFLFALLGHLCFLPYLDAITSSSGPPRVQVYSRYPPDSDKSNFLNCYVSGFHPPQITIELLKDGKKMENVEQSDLSFSKDWTFNLLVSAPFDPNSNSEFACKVTHSTLNEPKVVKWDKDN.

The first 21 residues, 1–21 (MSRLFLFALLGHLCFLPYLDA), serve as a signal peptide directing secretion. Residues 29-118 (PRVQVYSRYP…STLNEPKVVK (90 aa)) form the Ig-like C1-type domain. A disulfide bond links C49 and C104.

This sequence belongs to the beta-2-microglobulin family. In terms of assembly, heterodimer of an alpha chain and a beta chain. Beta-2-microglobulin is the beta-chain of major histocompatibility complex class I molecules.

It localises to the secreted. Functionally, component of the class I major histocompatibility complex (MHC). Involved in the presentation of peptide antigens to the immune system. This Monodelphis domestica (Gray short-tailed opossum) protein is Beta-2-microglobulin (B2M).